The following is a 178-amino-acid chain: Fucolectin-1 (178 aa).

Positions 1-20 are cleaved as a signal peptide; that stretch reads MKVKTIMLLFQILAISTIKS. The segment at 29–178 is F5/8 type C-like; sequence QENVAVRGKA…VEVNALLPVN (150 aa). The Ca(2+) site is built by D59, N61, and S70. Cystine bridges form between C71–C167, C103–C104, and C129–C145. Alpha-L-fucose is bound by residues H73 and R100. The Cell attachment site signature appears at 100–102; it reads RGD. An alpha-L-fucose-binding site is contributed by R107. Ca(2+) is bound by residues C167 and E168.

Belongs to the fucolectin family. Homotrimer. In terms of tissue distribution, parenchymal hepatocytes.

Its subcellular location is the secreted. The protein resides in the extracellular space. In terms of biological role, acts as a defensive agent. Recognizes blood group fucosylated oligosaccharides including A, B, H and Lewis B-type antigens. Does not recognize Lewis A antigen and has low affinity for monovalent haptens. The protein is Fucolectin-1 of Anguilla japonica (Japanese eel).